The primary structure comprises 89 residues: Small ribosomal subunit protein bS20 (89 aa).

Belongs to the bacterial ribosomal protein bS20 family.

Its function is as follows. Binds directly to 16S ribosomal RNA. In Hahella chejuensis (strain KCTC 2396), this protein is Small ribosomal subunit protein bS20.